Consider the following 97-residue polypeptide: Spermatogenesis-associated protein 45 (97 aa).

Belongs to the SPATA45 family.

The protein is Spermatogenesis-associated protein 45 (Spata45) of Mus musculus (Mouse).